Reading from the N-terminus, the 675-residue chain is L-type lectin-domain containing receptor kinase IV.1 (675 aa).

The signal sequence occupies residues 1-22 (MFLKLLTIFFFFFFNLIFQSSS). The Extracellular segment spans residues 23–291 (QSLNFAYNNG…EPKRISEFYK (269 aa)). Positions 25-261 (LNFAYNNGFN…SEHYILGWSF (237 aa)) are legume-lectin like. Residues Asn-57, Asn-79, Asn-112, Asn-134, Asn-153, and Asn-186 are each glycosylated (N-linked (GlcNAc...) asparagine). The helical transmembrane segment at 292-312 (IGMPLISLFLIFSFIFLVCYI) threads the bilayer. The Cytoplasmic segment spans residues 313 to 675 (VRRRRKFAEE…IADSQLSGGR (363 aa)). Positions 347–624 (FKEKGLLGTG…LHYLRGDAKL (278 aa)) constitute a Protein kinase domain. Residues 353 to 361 (LGTGGFGSV) and Lys-376 each bind ATP. Residue Asp-472 is the Proton acceptor of the active site.

This sequence in the C-terminal section; belongs to the protein kinase superfamily. Ser/Thr protein kinase family. In the N-terminal section; belongs to the leguminous lectin family.

The protein resides in the membrane. The enzyme catalyses L-seryl-[protein] + ATP = O-phospho-L-seryl-[protein] + ADP + H(+). It catalyses the reaction L-threonyl-[protein] + ATP = O-phospho-L-threonyl-[protein] + ADP + H(+). The polypeptide is L-type lectin-domain containing receptor kinase IV.1 (LECRK41) (Arabidopsis thaliana (Mouse-ear cress)).